The sequence spans 213 residues: tRNA (guanine-N(7)-)-methyltransferase (213 aa).

S-adenosyl-L-methionine contacts are provided by Glu-43, Asp-68, Asn-95, and Asn-117. Substrate is bound by residues Asp-153 and 190 to 193 (TEYE).

This sequence belongs to the class I-like SAM-binding methyltransferase superfamily. TrmB family.

It catalyses the reaction guanosine(46) in tRNA + S-adenosyl-L-methionine = N(7)-methylguanosine(46) in tRNA + S-adenosyl-L-homocysteine. The protein operates within tRNA modification; N(7)-methylguanine-tRNA biosynthesis. In terms of biological role, catalyzes the formation of N(7)-methylguanine at position 46 (m7G46) in tRNA. This Desulfitobacterium hafniense (strain DSM 10664 / DCB-2) protein is tRNA (guanine-N(7)-)-methyltransferase.